Here is a 369-residue protein sequence, read N- to C-terminus: Queuine tRNA-ribosyltransferase accessory subunit 2 (369 aa).

The tract at residues 263–282 (SSKLTEVEEENGNDSSNDQD) is disordered. Residues cysteine 308, cysteine 310, cysteine 313, and histidine 339 each contribute to the Zn(2+) site.

It belongs to the queuine tRNA-ribosyltransferase family. QTRT2 subfamily. As to quaternary structure, heterodimer of a catalytic subunit and an accessory subunit. Requires Zn(2+) as cofactor.

The protein resides in the cytoplasm. Its function is as follows. Non-catalytic subunit of the queuine tRNA-ribosyltransferase (TGT) that catalyzes the base-exchange of a guanine (G) residue with queuine (Q) at position 34 (anticodon wobble position) in tRNAs with GU(N) anticodons (tRNA-Asp, -Asn, -His and -Tyr), resulting in the hypermodified nucleoside queuosine (7-(((4,5-cis-dihydroxy-2-cyclopenten-1-yl)amino)methyl)-7-deazaguanosine). The protein is Queuine tRNA-ribosyltransferase accessory subunit 2 of Trichoplax adhaerens (Trichoplax reptans).